The chain runs to 79 residues: Acyl carrier protein (79 aa).

Residues 2 to 77 (ENIEQRVKKI…QAIDYVNAHL (76 aa)) enclose the Carrier domain. Position 37 is an O-(pantetheine 4'-phosphoryl)serine (serine 37).

It belongs to the acyl carrier protein (ACP) family. Post-translationally, 4'-phosphopantetheine is transferred from CoA to a specific serine of apo-ACP by AcpS. This modification is essential for activity because fatty acids are bound in thioester linkage to the sulfhydryl of the prosthetic group.

The protein resides in the cytoplasm. It participates in lipid metabolism; fatty acid biosynthesis. Functionally, carrier of the growing fatty acid chain in fatty acid biosynthesis. This Azoarcus sp. (strain BH72) protein is Acyl carrier protein.